Consider the following 541-residue polypeptide: Eukaryotic translation initiation factor 3 subunit D-1 (541 aa).

Residues 98 to 136 (VQKPPHQRGRFRNMRGRGGRGRNPRGGLNNHHHHGMTTL) form a disordered region. The segment covering 100–120 (KPPHQRGRFRNMRGRGGRGRN) has biased composition (basic residues).

It belongs to the eIF-3 subunit D family. In terms of assembly, component of the eukaryotic translation initiation factor 3 (eIF-3) complex. The eIF-3 complex interacts with pix.

Its subcellular location is the cytoplasm. MRNA cap-binding component of the eukaryotic translation initiation factor 3 (eIF-3) complex, which is involved in protein synthesis of a specialized repertoire of mRNAs and, together with other initiation factors, stimulates binding of mRNA and methionyl-tRNAi to the 40S ribosome. The eIF-3 complex specifically targets and initiates translation of a subset of mRNAs involved in cell proliferation. In the eIF-3 complex, eif3d specifically recognizes and binds the 7-methylguanosine cap of a subset of mRNAs. The polypeptide is Eukaryotic translation initiation factor 3 subunit D-1 (Drosophila persimilis (Fruit fly)).